A 400-amino-acid chain; its full sequence is MAKEKFVRTKPHVNVGTIGHIDHGKSTLTAAITKYLSLKGLAQYVPYDQIDKAPEEKARGITINITHVEYETEKRHYAHIDCPGHADYIKNMITGAAQMDGAILVVAATDGPMPQTREHVLLARQVEVPYMIVFINKTDMVDDPELIELVEMEVRDLLSQYEYPGDEVPVIKGSALKALEAPDDPNHEAYKPIQELLDAMDNYIPDPQRDVDKPFLMPIEDVFSITGRGTVVTGRIERGRIRPGDEVEIIGLSYEIRKTVVTSVEMFRKELDEGIAGDNVGCLLRGIDKDEVERGQVLAAPGSIKPHKRFKAEVYVLKKEEGGRHTPFTKGYKPQFYIRTADVTGEIVGLPEGVEMVMPGDHVEMEIELIYPVAIEKGQRFAIREGGRTVGAGVVTEVIE.

Positions 10-208 (KPHVNVGTIG…AMDNYIPDPQ (199 aa)) constitute a tr-type G domain. The segment at 19–26 (GHIDHGKS) is G1. 19-26 (GHIDHGKS) is a binding site for GTP. Mg(2+) is bound at residue Ser-26. Positions 60-64 (GITIN) are G2. The tract at residues 81 to 84 (DCPG) is G3. GTP-binding positions include 81–85 (DCPGH) and 136–139 (NKTD). The G4 stretch occupies residues 136–139 (NKTD). Positions 174–176 (SAL) are G5.

This sequence belongs to the TRAFAC class translation factor GTPase superfamily. Classic translation factor GTPase family. EF-Tu/EF-1A subfamily. As to quaternary structure, monomer.

The protein resides in the cytoplasm. It carries out the reaction GTP + H2O = GDP + phosphate + H(+). Functionally, GTP hydrolase that promotes the GTP-dependent binding of aminoacyl-tRNA to the A-site of ribosomes during protein biosynthesis. This Thermotoga neapolitana (strain ATCC 49049 / DSM 4359 / NBRC 107923 / NS-E) protein is Elongation factor Tu.